A 433-amino-acid polypeptide reads, in one-letter code: GTPase Der (433 aa).

2 consecutive EngA-type G domains span residues 3–167 (NRVV…KEEK) and 175–347 (IKVA…KDYT). Residues 9 to 16 (GRPNVGKS), 56 to 60 (DTGGL), 119 to 122 (NKID), 181 to 188 (GRPNVGKS), 228 to 232 (DTAGV), and 293 to 296 (NKMD) each bind GTP. The KH-like domain maps to 348–432 (KQHKTSFVNR…PIKLVIKGRE (85 aa)).

Belongs to the TRAFAC class TrmE-Era-EngA-EngB-Septin-like GTPase superfamily. EngA (Der) GTPase family. In terms of assembly, associates with the 50S ribosomal subunit.

GTPase that plays an essential role in the late steps of ribosome biogenesis. The sequence is that of GTPase Der from Aquifex aeolicus (strain VF5).